Here is a 154-residue protein sequence, read N- to C-terminus: Transcriptional repressor NrdR (154 aa).

Residues 3-34 fold into a zinc finger; it reads CPYCRHPDSRVVDSREADDGQLIRRRRSCPEC. The 91-residue stretch at 46 to 136 folds into the ATP-cone domain; that stretch reads LAVVKRSGVT…VYRSFESLAD (91 aa).

This sequence belongs to the NrdR family. Requires Zn(2+) as cofactor.

Functionally, negatively regulates transcription of bacterial ribonucleotide reductase nrd genes and operons by binding to NrdR-boxes. This is Transcriptional repressor NrdR from Salinispora arenicola (strain CNS-205).